The following is a 276-amino-acid chain: Large ribosomal subunit protein uL2 (276 aa).

The disordered stretch occupies residues 223 to 276 (VVMNPVDHPHGGGEGKSSGGRHPVSPWGKKTRGPKTRNNKVTDRLIIRRRNAKR). Basic residues predominate over residues 251-260 (KKTRGPKTRN).

This sequence belongs to the universal ribosomal protein uL2 family. Part of the 50S ribosomal subunit. Forms a bridge to the 30S subunit in the 70S ribosome.

Functionally, one of the primary rRNA binding proteins. Required for association of the 30S and 50S subunits to form the 70S ribosome, for tRNA binding and peptide bond formation. It has been suggested to have peptidyltransferase activity; this is somewhat controversial. Makes several contacts with the 16S rRNA in the 70S ribosome. The polypeptide is Large ribosomal subunit protein uL2 (Hyphomonas neptunium (strain ATCC 15444)).